The following is a 500-amino-acid chain: Glycerol kinase (500 aa).

T12 provides a ligand contact to ADP. Residues T12, T13, and S14 each coordinate ATP. T12 contacts sn-glycerol 3-phosphate. R16 provides a ligand contact to ADP. Sn-glycerol 3-phosphate-binding residues include R82, E83, Y135, and D245. Glycerol-binding residues include R82, E83, Y135, D245, and Q246. Residues T267 and G310 each coordinate ADP. Residues T267, G310, Q314, and G411 each contribute to the ATP site. ADP-binding residues include G411 and N415.

Belongs to the FGGY kinase family. Homotetramer and homodimer (in equilibrium).

The catalysed reaction is glycerol + ATP = sn-glycerol 3-phosphate + ADP + H(+). It functions in the pathway polyol metabolism; glycerol degradation via glycerol kinase pathway; sn-glycerol 3-phosphate from glycerol: step 1/1. Activated by phosphorylation and inhibited by fructose 1,6-bisphosphate (FBP). Key enzyme in the regulation of glycerol uptake and metabolism. Catalyzes the phosphorylation of glycerol to yield sn-glycerol 3-phosphate. This Clostridium perfringens (strain ATCC 13124 / DSM 756 / JCM 1290 / NCIMB 6125 / NCTC 8237 / Type A) protein is Glycerol kinase.